Here is a 70-residue protein sequence, read N- to C-terminus: DNA-directed RNA polymerase subunit omega (70 aa).

This sequence belongs to the RNA polymerase subunit omega family. In terms of assembly, the RNAP catalytic core consists of 2 alpha, 1 beta, 1 beta' and 1 omega subunit. When a sigma factor is associated with the core the holoenzyme is formed, which can initiate transcription.

The enzyme catalyses RNA(n) + a ribonucleoside 5'-triphosphate = RNA(n+1) + diphosphate. Functionally, promotes RNA polymerase assembly. Latches the N- and C-terminal regions of the beta' subunit thereby facilitating its interaction with the beta and alpha subunits. The protein is DNA-directed RNA polymerase subunit omega of Bacillus cytotoxicus (strain DSM 22905 / CIP 110041 / 391-98 / NVH 391-98).